An 82-amino-acid polypeptide reads, in one-letter code: MKSIIINFVRLYQKWISPLFPPSCRYRPTCSTYMIEAVEKHGIKGVLMGIARILRCHPFVEGGEDPVPDEFTLRRNPQKGKK.

This sequence belongs to the UPF0161 family.

It localises to the cell membrane. Could be involved in insertion of integral membrane proteins into the membrane. This Streptococcus uberis (strain ATCC BAA-854 / 0140J) protein is Putative membrane protein insertion efficiency factor.